Reading from the N-terminus, the 353-residue chain is Photosystem II D2 protein (353 aa).

Threonine 2 carries the N-acetylthreonine modification. Threonine 2 is modified (phosphothreonine). The helical transmembrane segment at 41 to 61 (CAYFALGGWFTGTTFVTSWYT) threads the bilayer. Histidine 118 provides a ligand contact to chlorophyll a. A helical membrane pass occupies residues 125–141 (GFMLRQFELARSVQLRP). Positions 130 and 143 each coordinate pheophytin a. A helical transmembrane segment spans residues 153–166 (VFVSVFLIYPLGQS). Histidine 198 is a binding site for chlorophyll a. The chain crosses the membrane as a helical span at residues 208-228 (AALLCAIHGATVENTLFEDGD). A plastoquinone contacts are provided by histidine 215 and phenylalanine 262. Histidine 215 is a binding site for Fe cation. A Fe cation-binding site is contributed by histidine 269. Residues 279 to 295 (GLWMSALGVVGLALNLR) traverse the membrane as a helical segment.

Belongs to the reaction center PufL/M/PsbA/D family. As to quaternary structure, PSII is composed of 1 copy each of membrane proteins PsbA, PsbB, PsbC, PsbD, PsbE, PsbF, PsbH, PsbI, PsbJ, PsbK, PsbL, PsbM, PsbT, PsbX, PsbY, PsbZ, Psb30/Ycf12, at least 3 peripheral proteins of the oxygen-evolving complex and a large number of cofactors. It forms dimeric complexes. The D1/D2 heterodimer binds P680, chlorophylls that are the primary electron donor of PSII, and subsequent electron acceptors. It shares a non-heme iron and each subunit binds pheophytin, quinone, additional chlorophylls, carotenoids and lipids. There is also a Cl(-1) ion associated with D1 and D2, which is required for oxygen evolution. The PSII complex binds additional chlorophylls, carotenoids and specific lipids. is required as a cofactor.

The protein resides in the plastid. It localises to the chloroplast thylakoid membrane. It carries out the reaction 2 a plastoquinone + 4 hnu + 2 H2O = 2 a plastoquinol + O2. Photosystem II (PSII) is a light-driven water:plastoquinone oxidoreductase that uses light energy to abstract electrons from H(2)O, generating O(2) and a proton gradient subsequently used for ATP formation. It consists of a core antenna complex that captures photons, and an electron transfer chain that converts photonic excitation into a charge separation. The D1/D2 (PsbA/PsbD) reaction center heterodimer binds P680, the primary electron donor of PSII as well as several subsequent electron acceptors. D2 is needed for assembly of a stable PSII complex. The sequence is that of Photosystem II D2 protein from Spinacia oleracea (Spinach).